The primary structure comprises 431 residues: Glutamate-1-semialdehyde 2,1-aminomutase (431 aa).

Residue K269 is modified to N6-(pyridoxal phosphate)lysine.

The protein belongs to the class-III pyridoxal-phosphate-dependent aminotransferase family. HemL subfamily. As to quaternary structure, homodimer. The cofactor is pyridoxal 5'-phosphate.

It is found in the cytoplasm. It carries out the reaction (S)-4-amino-5-oxopentanoate = 5-aminolevulinate. It participates in porphyrin-containing compound metabolism; protoporphyrin-IX biosynthesis; 5-aminolevulinate from L-glutamyl-tRNA(Glu): step 2/2. This chain is Glutamate-1-semialdehyde 2,1-aminomutase, found in Francisella tularensis subsp. mediasiatica (strain FSC147).